A 262-amino-acid polypeptide reads, in one-letter code: Virulence plasmid protein pGP6-D-related protein (262 aa).

It belongs to the UPF0137 (pGP6-D) family.

The polypeptide is Virulence plasmid protein pGP6-D-related protein (Chlamydia muridarum (strain MoPn / Nigg)).